Here is a 1011-residue protein sequence, read N- to C-terminus: DTSEFDPLANKEYTEEQKQTEEQEQKEFLSQTTTPALEADDGFIVTSASFAQSTPSMSALSGNISPDSQTSDPITKAVRETIIQPQKDNLIEQILKDLAALTDRDLAEQKRKEIEEEKEKNKTLSTFFGNPANREFIDKALEKPELKKKLESIEIAGYNNVHNTFSAASGYPGGFKPVQWENHVSASDLRATVVKNDAGDELCTLNETTVKTKPFTLAKQDGTQVQISSYREIDFPIKLDKADGSMHLSMVALKADGTKPSKDKAVYFTAHYEEGPNGKPQLKEISSPKPLKFAGTGDDAIAYIEHGGEIYTLAVTRGKYKEMMKEVELNQGQSVDLSQAEDIIIGQGQSKEQPLITPQQTTSSSVEPPQYKQQVPPITPTNQPLQPETSQMPQSQQVNPNLLNTATALSGSMQDLLNYVNAGLTKEIDSNKQIDLIKEAATAILNNEKSDIAEKQANIIALAENTVNNKNLKPDAKVAGVNAVLETIKNDQNTPNLEKLKMLEATVAIILNSENLEPKQKQQMLEKAVDVGLSLKDDASRAVTIDGIKDVVIKTNLSTEDKGTMLIAVGDKVNVSELSNAEKQKSLGSVLKKGVEAQVLSPAQQQLIQQHLDKITAEQIKKDTIKKVNDILFDPLSNTELKTTNIQAITSNVLDGPATAKVKGEIIQEITNTVAGSSLEAQDKAAIIKGIGETIATHSDTSLSLPNKALIMASAEKGIAESQTNLPDRELMTKGLVDGIYEGKGGPEITKAVSSGIDNSNINDSEKEALKKAKDAASEAALDRDTQNLTEGLKGQNIEEHKPHDDIYNKAREVINAVNPVIEALEKSKEPVVSAEERIVQETSSILNNISKLAVEKVNNFRAMLSPNGNLKTLEEKKEESIKKVDELVKAFGTKSSTEEQQSFIKTNLIDDKTLSKEVRLQTIDKLLQEQKRAEAIENPSVKTEDVRVVSGKSKLKPISKDNPDIEKAKMVVGRDRVNIKGNIKIMGALMNARDIIQSENLNKSTPIKRE.

Disordered regions lie at residues 1-37, 54-73, and 348-396; these read DTSE…TPAL, TPSM…TSDP, and GQSK…PQSQ. A compositionally biased stretch (basic and acidic residues) spans 12 to 27; the sequence is EYTEEQKQTEEQEQKE. Composition is skewed to polar residues over residues 348 to 373 and 380 to 396; these read GQSK…QYKQ and PTNQ…PQSQ.

The protein resides in the cytoplasm. The protein is Antigenic heat-stable 120 kDa protein (sca4) of Rickettsia sibirica subsp. mongolitimonae (Rickettsia mongolotimonae).